Consider the following 590-residue polypeptide: Zinc finger protein 285 (590 aa).

The KRAB domain maps to 8–86 (VTFKDVAVVF…WKQRIRDLTV (79 aa)). The segment at 232–254 (FPCNNCGVAFADDTDPHVHHSTH) adopts a C2H2-type 1 zinc-finger fold. The C2H2-type 2; degenerate zinc finger occupies 260–282 (YKCDQYGKNFSQSQDLIVHCKTH). 9 consecutive C2H2-type zinc fingers follow at residues 316 to 338 (YKCKECGKGFRRSSSLHNHHRVH), 344 to 366 (YKCDECGKGFGFRSLLCIHQGVH), 372 to 394 (YKCEECGKGFDQSSNLLVHQRVH), 400 to 422 (YKCSECGKCFSSSSVLQVHWRFH), 428 to 450 (YRCGECGKGFSQCTHLHIHQRVH), 456 to 478 (YKCNVCGKDFAYSSVLHTHQRVH), 484 to 506 (YKCEVCGKCFSYSSYFHLHQRDH), 512 to 534 (YKCDECGKGFSRNSDLNVHLRVH), and 540 to 562 (YKCKACGKGFSRNSYLLAHQRVH).

The protein belongs to the krueppel C2H2-type zinc-finger protein family.

It is found in the nucleus. In terms of biological role, may be involved in transcriptional regulation. In Homo sapiens (Human), this protein is Zinc finger protein 285 (ZNF285).